Consider the following 249-residue polypeptide: 5'-nucleotidase SurE (249 aa).

Residues aspartate 9, aspartate 10, serine 40, and asparagine 92 each coordinate a divalent metal cation.

Belongs to the SurE nucleotidase family. A divalent metal cation serves as cofactor.

The protein resides in the cytoplasm. It carries out the reaction a ribonucleoside 5'-phosphate + H2O = a ribonucleoside + phosphate. Its function is as follows. Nucleotidase that shows phosphatase activity on nucleoside 5'-monophosphates. The polypeptide is 5'-nucleotidase SurE (Shewanella loihica (strain ATCC BAA-1088 / PV-4)).